The following is a 557-amino-acid chain: Protein PNS1 (557 aa).

The disordered stretch occupies residues 1 to 58; it reads MSTEKQYQPQQPPPAYTGQGPDNGNAYGYPESYGKTETHSGDSCSGDTSMNPQQQGQQ. The Cytoplasmic segment spans residues 1-99; it reads MSTEKQYQPQ…DNNKPKFNDW (99 aa). A compositionally biased stretch (polar residues) spans 41 to 58; the sequence is GDSCSGDTSMNPQQQGQQ. The chain crosses the membrane as a helical span at residues 100-120; sequence PFIIVFLLTLCGFIVVASLTL. The Extracellular segment spans residues 121–147; sequence RAWSQTYSSTGSGIYHDFDTGTLNTNS. A helical transmembrane segment spans residues 148 to 168; the sequence is VILLVFSVVIAIFFAFIGIVL. Topologically, residues 169–174 are cytoplasmic; that stretch reads CRAYPK. A helical transmembrane segment spans residues 175–195; the sequence is FFIYAGMIVNILAALGTAIMY. Over 196-200 the chain is Extracellular; it reads MSLKY. The helical transmembrane segment at 201–221 threads the bilayer; it reads WSAGIVFLIFTFMTAWCYWGM. The Cytoplasmic portion of the chain corresponds to 222-246; sequence RSRIPLTVAILRVIVLAMKNCPQSL. The helical transmembrane segment at 247–267 threads the bilayer; it reads FVSFFGTIVASAFAMLFSTVV. The Extracellular segment spans residues 268–292; the sequence is VATYMKYDPSNTNSGCNVSGGDCSH. N-linked (GlcNAc...) asparagine glycosylation is present at asparagine 284. Residues 293 to 313 form a helical membrane-spanning segment; that stretch reads AKLIGVLVVVFFCGYYISEVI. The Cytoplasmic segment spans residues 314–350; the sequence is RNVMHCTVSGVFGSWYYRYKSDQGMPKWPAMGAFKRA. The helical transmembrane segment at 351-371 threads the bilayer; sequence MTYSFGSICFGSLIVSIIETF. At 372–393 the chain is on the extracellular side; sequence RQLLQLGKQAAIASTDNANWIR. Residues 394-414 form a helical membrane-spanning segment; it reads IIFWLIDMLVGFIQWIAQYFN. At 415–454 the chain is on the cytoplasmic side; it reads HYAYCIIALYGKPYLKAAKQTWYMFREKGIDALINDNLVN. The helical transmembrane segment at 455 to 475 threads the bilayer; sequence VALGFYSLFASYMSCLFAFLY. Topologically, residues 476–488 are extracellular; it reads LRFTKPGYNSDGD. Residues 489–509 traverse the membrane as a helical segment; the sequence is FNAPLMAFAFVIALQLTNIAN. Over 510-557 the chain is Cytoplasmic; that stretch reads ETIRSGCATFFTALGHDPEVFQAQYPDRFDEIFRSYPQVLNKLTHQDV.

It belongs to the CTL (choline transporter-like) family.

The protein localises to the cell membrane. Functionally, probably involved in transport through the plasma membrane. In Candida glabrata (strain ATCC 2001 / BCRC 20586 / JCM 3761 / NBRC 0622 / NRRL Y-65 / CBS 138) (Yeast), this protein is Protein PNS1 (PNS1).